The chain runs to 174 residues: Flavodoxin 1 (174 aa).

A Flavodoxin-like domain is found at 4 to 168 (IGIFYGSSSG…RLERWIAVLQ (165 aa)). Residues 10-14 (SSSGV) and 89-122 (LFGA…ALVG) each bind FMN.

It depends on FMN as a cofactor.

In terms of biological role, flavodoxins are low-potential electron donors to a number of redox enzymes. AvFld 1 is able to donate electrons to the assimilatory nitrate reductase of A.vinelandii to catalyze the reduction of nitrate to nitrite. This Azotobacter vinelandii (strain DJ / ATCC BAA-1303) protein is Flavodoxin 1.